A 254-amino-acid polypeptide reads, in one-letter code: Fluoride-specific ion channel FluC 1 (254 aa).

Helical transmembrane passes span 19–39 (LDILVANVVACFLLGTVTALY), 51–71 (IIGMGMMGGVSTFSSFAYGSV), and 80–100 (AFLIAAAYVTVSVVAGYVAVL). Gly-58 and Ser-61 together coordinate Na(+).

Belongs to the fluoride channel Fluc/FEX (TC 1.A.43) family.

It localises to the cell inner membrane. It carries out the reaction fluoride(in) = fluoride(out). Na(+) is not transported, but it plays an essential structural role and its presence is essential for fluoride channel function. In terms of biological role, fluoride-specific ion channel. Important for reducing fluoride concentration in the cell, thus reducing its toxicity. The protein is Fluoride-specific ion channel FluC 1 of Brucella suis biovar 1 (strain 1330).